We begin with the raw amino-acid sequence, 581 residues long: uncharacterized protein (581 aa).

An N-terminal signal peptide occupies residues 1–28; sequence MDSKAVSPLIGFVLMLAIIMGLIGIMQA.

This is an uncharacterized protein from Archaeoglobus fulgidus (strain ATCC 49558 / DSM 4304 / JCM 9628 / NBRC 100126 / VC-16).